A 250-amino-acid polypeptide reads, in one-letter code: Ubiquinone/menaquinone biosynthesis C-methyltransferase UbiE (250 aa).

S-adenosyl-L-methionine contacts are provided by residues Thr-74, Asp-94, 122-123 (DA), and Ser-139.

Belongs to the class I-like SAM-binding methyltransferase superfamily. MenG/UbiE family.

The catalysed reaction is a 2-demethylmenaquinol + S-adenosyl-L-methionine = a menaquinol + S-adenosyl-L-homocysteine + H(+). The enzyme catalyses a 2-methoxy-6-(all-trans-polyprenyl)benzene-1,4-diol + S-adenosyl-L-methionine = a 5-methoxy-2-methyl-3-(all-trans-polyprenyl)benzene-1,4-diol + S-adenosyl-L-homocysteine + H(+). The protein operates within quinol/quinone metabolism; menaquinone biosynthesis; menaquinol from 1,4-dihydroxy-2-naphthoate: step 2/2. It participates in cofactor biosynthesis; ubiquinone biosynthesis. In terms of biological role, methyltransferase required for the conversion of demethylmenaquinol (DMKH2) to menaquinol (MKH2) and the conversion of 2-polyprenyl-6-methoxy-1,4-benzoquinol (DDMQH2) to 2-polyprenyl-3-methyl-6-methoxy-1,4-benzoquinol (DMQH2). The protein is Ubiquinone/menaquinone biosynthesis C-methyltransferase UbiE of Ruegeria sp. (strain TM1040) (Silicibacter sp.).